A 320-amino-acid chain; its full sequence is ATPase H(+)-transporting accessory protein 2 (320 aa).

Residues 1–17 (MLRVFVIFSLFIAAINA) form the signal peptide. Residues 18 to 277 (SGEFTVLNRP…YGSDYPVIFN (260 aa)) lie on the Lumenal side of the membrane. The chain crosses the membrane as a helical span at residues 278 to 298 (IILWFMVVFGLSLLAICYAIA). The Cytoplasmic portion of the chain corresponds to 299-320 (AMDPGRDSIIYRMTSTRIKKDN). Residues 317–320 (KKDN) carry the Mediates retrograde transport to the ER motif.

Interacts with fz and fz2. Interacts (via N-terminus) with stan. As an accessory component of the multisubunit proton-transporting vacuolar (V)-ATPase protein pump, might interacts with VhaAC45. Post-translationally, proteolytically cleaved by a furin-like convertase in the trans-Golgi network to generate N- and C-terminal fragments. Cleavage is reduced in the fat body.

It localises to the cell membrane. Its subcellular location is the endoplasmic reticulum membrane. The protein resides in the vesicle. The protein localises to the apical cell membrane. It is found in the golgi apparatus membrane. It localises to the secreted. In terms of biological role, multifunctional protein which functions as a transmembrane receptor in the planar cell polarity (PCP) and is involved in the assembly of the proton-transporting vacuolar (V)-ATPase protein pump. As transmembrane receptor mediates fz/PCP signaling through interaction with fz and stabilizes asymmetric PCP domains through its interaction with stan. Also mediates Wnt/beta-cat signaling through interaction with fz/fz2. Probably by controlling the assembly of the V-ATPase pump and thus the acidification of the endo-lysosomal system, plays a role in many neuronal processes including synapse morphology and synaptic transmission. Functionally, stabilizes asymmetric Planar Cell Polarity (PCP) domains through its interaction with stan. This is ATPase H(+)-transporting accessory protein 2 from Drosophila melanogaster (Fruit fly).